Consider the following 333-residue polypeptide: DNA-directed RNA polymerase subunit alpha (333 aa).

The tract at residues 1–233 (MVREKIRVST…DLFIPFLHAE (233 aa)) is alpha N-terminal domain (alpha-NTD). The interval 269 to 333 (IALKYIFIDQ…DILEMEKNFA (65 aa)) is alpha C-terminal domain (alpha-CTD).

Belongs to the RNA polymerase alpha chain family. In terms of assembly, in plastids the minimal PEP RNA polymerase catalytic core is composed of four subunits: alpha, beta, beta', and beta''. When a (nuclear-encoded) sigma factor is associated with the core the holoenzyme is formed, which can initiate transcription.

The protein localises to the plastid. It is found in the chloroplast. The catalysed reaction is RNA(n) + a ribonucleoside 5'-triphosphate = RNA(n+1) + diphosphate. Its function is as follows. DNA-dependent RNA polymerase catalyzes the transcription of DNA into RNA using the four ribonucleoside triphosphates as substrates. The sequence is that of DNA-directed RNA polymerase subunit alpha from Cucumis sativus (Cucumber).